Here is a 228-residue protein sequence, read N- to C-terminus: Potassium/proton antiporter CemA (228 aa).

3 helical membrane-spanning segments follow: residues 6-26 (FIPL…SFSF), 113-133 (IICF…LFIL), and 188-208 (IISG…KYWI).

It belongs to the CemA family.

It is found in the plastid. It localises to the chloroplast inner membrane. The enzyme catalyses K(+)(in) + H(+)(out) = K(+)(out) + H(+)(in). In terms of biological role, contributes to K(+)/H(+) antiport activity by supporting proton efflux to control proton extrusion and homeostasis in chloroplasts in a light-dependent manner to modulate photosynthesis. Prevents excessive induction of non-photochemical quenching (NPQ) under continuous-light conditions. Indirectly promotes efficient inorganic carbon uptake into chloroplasts. The chain is Potassium/proton antiporter CemA from Populus alba (White poplar).